The following is a 660-amino-acid chain: Bifunctional polymyxin resistance protein ArnA (660 aa).

Positions 1–304 (MKTVVFAYHD…MLGLVQGSRL (304 aa)) are formyltransferase ArnAFT. 86–88 (HLI) lines the (6R)-10-formyltetrahydrofolate pocket. His104 serves as the catalytic Proton donor; for formyltransferase activity. (6R)-10-formyltetrahydrofolate-binding positions include Arg114 and 136-140 (VKRAD). Positions 314–660 (RRTRVLILGV…RTVDLTDKPS (347 aa)) are dehydrogenase ArnADH. NAD(+) contacts are provided by residues Asp347 and 368–369 (DI). UDP-alpha-D-glucuronate is bound by residues Ala393, Tyr398, and 432–433 (TS). Glu434 serves as the catalytic Proton acceptor; for decarboxylase activity. Residues Arg460, Asn492, 526–535 (KLIDGGKQKR), and Tyr613 each bind UDP-alpha-D-glucuronate. The active-site Proton donor; for decarboxylase activity is Arg619.

This sequence in the N-terminal section; belongs to the Fmt family. UDP-L-Ara4N formyltransferase subfamily. In the C-terminal section; belongs to the NAD(P)-dependent epimerase/dehydratase family. UDP-glucuronic acid decarboxylase subfamily. Homohexamer, formed by a dimer of trimers.

It catalyses the reaction UDP-alpha-D-glucuronate + NAD(+) = UDP-beta-L-threo-pentopyranos-4-ulose + CO2 + NADH. The catalysed reaction is UDP-4-amino-4-deoxy-beta-L-arabinose + (6R)-10-formyltetrahydrofolate = UDP-4-deoxy-4-formamido-beta-L-arabinose + (6S)-5,6,7,8-tetrahydrofolate + H(+). The protein operates within nucleotide-sugar biosynthesis; UDP-4-deoxy-4-formamido-beta-L-arabinose biosynthesis; UDP-4-deoxy-4-formamido-beta-L-arabinose from UDP-alpha-D-glucuronate: step 1/3. It functions in the pathway nucleotide-sugar biosynthesis; UDP-4-deoxy-4-formamido-beta-L-arabinose biosynthesis; UDP-4-deoxy-4-formamido-beta-L-arabinose from UDP-alpha-D-glucuronate: step 3/3. Its pathway is bacterial outer membrane biogenesis; lipopolysaccharide biosynthesis. Bifunctional enzyme that catalyzes the oxidative decarboxylation of UDP-glucuronic acid (UDP-GlcUA) to UDP-4-keto-arabinose (UDP-Ara4O) and the addition of a formyl group to UDP-4-amino-4-deoxy-L-arabinose (UDP-L-Ara4N) to form UDP-L-4-formamido-arabinose (UDP-L-Ara4FN). The modified arabinose is attached to lipid A and is required for resistance to polymyxin and cationic antimicrobial peptides. The sequence is that of Bifunctional polymyxin resistance protein ArnA from Shigella flexneri.